The following is a 375-amino-acid chain: Succinyl-diaminopimelate desuccinylase (375 aa).

Histidine 66 is a binding site for Zn(2+). The active site involves aspartate 68. Residue aspartate 99 participates in Zn(2+) binding. Glutamate 133 serves as the catalytic Proton acceptor. Zn(2+)-binding residues include glutamate 134, glutamate 162, and histidine 348.

It belongs to the peptidase M20A family. DapE subfamily. As to quaternary structure, homodimer. The cofactor is Zn(2+). Co(2+) is required as a cofactor.

It carries out the reaction N-succinyl-(2S,6S)-2,6-diaminopimelate + H2O = (2S,6S)-2,6-diaminopimelate + succinate. The protein operates within amino-acid biosynthesis; L-lysine biosynthesis via DAP pathway; LL-2,6-diaminopimelate from (S)-tetrahydrodipicolinate (succinylase route): step 3/3. In terms of biological role, catalyzes the hydrolysis of N-succinyl-L,L-diaminopimelic acid (SDAP), forming succinate and LL-2,6-diaminopimelate (DAP), an intermediate involved in the bacterial biosynthesis of lysine and meso-diaminopimelic acid, an essential component of bacterial cell walls. In Aeromonas salmonicida (strain A449), this protein is Succinyl-diaminopimelate desuccinylase.